The sequence spans 445 residues: Histamine H3 receptor (445 aa).

Topologically, residues 1–39 (MERAPPDGLMNASGTLAGEAAAAGGARGFSAAWTAVLAA) are extracellular. Asn-11 is a glycosylation site (N-linked (GlcNAc...) asparagine). The helical transmembrane segment at 40 to 60 (LMALLIVATVLGNALVMLAFV) threads the bilayer. The Cytoplasmic segment spans residues 61 to 70 (ADSSLRTQNN). The chain crosses the membrane as a helical span at residues 71–91 (FFLLNLAISDFLVGAFCIPLY). Residues 92 to 108 (VPYVLTGRWTFGRGLCK) are Extracellular-facing. Cysteines 107 and 188 form a disulfide. Residues 109-129 (LWLVVDYLLCASSVFNIVLIS) form a helical membrane-spanning segment. Over 130–156 (YDRFLSVTRAVSYRAQQGDTRRAVRKM) the chain is Cytoplasmic. The chain crosses the membrane as a helical span at residues 157 to 177 (ALVWVLAFLLYGPAILSWEYL). Residues 178 to 196 (SGGSSIPEGHCYAEFFYNW) lie on the Extracellular side of the membrane. A helical transmembrane segment spans residues 197 to 217 (YFLITASTLEFFTPFLSVTFF). Over 218–359 (NLSIYLNIQR…LSRDKKVAKS (142 aa)) the chain is Cytoplasmic. 2 disordered regions span residues 234-259 (DGGR…PSCW) and 286-336 (AGEA…LEKR). A compositionally biased stretch (pro residues) spans 241–256 (PEPPPDAQPSPPPAPP). Over residues 290–299 (ALGGGSGGGA) the composition is skewed to gly residues. The segment covering 300–312 (AASPTSSSGSSSR) has biased composition (low complexity). The helical transmembrane segment at 360–380 (LAIIVSIFGLCWAPYTLLMII) threads the bilayer. At 381–396 (RAACHGRCIPDYWYET) the chain is on the extracellular side. A helical transmembrane segment spans residues 397–417 (SFWLLWANSAVNPVLYPLCHY). Topologically, residues 418 to 445 (SFRRAFTKLLCPQKLKVQPHGSLEQCWK) are cytoplasmic. Ser-439 is subject to Phosphoserine.

The protein belongs to the G-protein coupled receptor 1 family. Expressed abundantly in brain, most notably throughout the thalamus, the ventromedial hypothalamus and the caudate nucleus. Isoform 1 is largely predominant in all tissues.

The protein resides in the cell membrane. The H3 subclass of histamine receptors could mediate the histamine signals in CNS and peripheral nervous system. Signals through the inhibition of adenylate cyclase and displays high constitutive activity (spontaneous activity in the absence of agonist). The polypeptide is Histamine H3 receptor (Hrh3) (Rattus norvegicus (Rat)).